A 124-amino-acid polypeptide reads, in one-letter code: Late histone H2A.2.1 (124 aa).

A compositionally biased stretch (basic residues) spans 1-18; it reads MSGRGKGAKAKSKAKSRS. The disordered stretch occupies residues 1 to 21; that stretch reads MSGRGKGAKAKSKAKSRSSRA. Residue Ser2 is modified to N-acetylserine. Ser2 is subject to Phosphoserine. Position 104 is an N5-methylglutamine (Gln104). Lys119 is covalently cross-linked (Glycyl lysine isopeptide (Lys-Gly) (interchain with G-Cter in ubiquitin)).

The protein belongs to the histone H2A family. The nucleosome is a histone octamer containing two molecules each of H2A, H2B, H3 and H4 assembled in one H3-H4 heterotetramer and two H2A-H2B heterodimers. The octamer wraps approximately 147 bp of DNA. Monoubiquitination of Lys-119 gives a specific tag for epigenetic transcriptional repression. In terms of processing, phosphorylation of Ser-2 directly represses transcription.

The protein resides in the nucleus. It is found in the chromosome. Functionally, core component of nucleosome. Nucleosomes wrap and compact DNA into chromatin, limiting DNA accessibility to the cellular machineries which require DNA as a template. Histones thereby play a central role in transcription regulation, DNA repair, DNA replication and chromosomal stability. DNA accessibility is regulated via a complex set of post-translational modifications of histones, also called histone code, and nucleosome remodeling. This Psammechinus miliaris (Green sea urchin) protein is Late histone H2A.2.1.